A 230-amino-acid chain; its full sequence is V-type proton ATPase subunit E (230 aa).

The protein belongs to the V-ATPase E subunit family. V-ATPase is a heteromultimeric enzyme composed of a peripheral catalytic V1 complex (components A to H) attached to an integral membrane V0 proton pore complex (components: a, c, c', c'' and d).

In terms of biological role, subunit of the peripheral V1 complex of vacuolar ATPase essential for assembly or catalytic function. V-ATPase is responsible for acidifying a variety of intracellular compartments in eukaryotic cells. The polypeptide is V-type proton ATPase subunit E (VATE) (Citrus unshiu (Satsuma mandarin)).